The following is a 443-amino-acid chain: Monooxygenase asqM (443 aa).

It belongs to the aromatic-ring hydroxylase family. Requires FAD as cofactor.

The protein operates within secondary metabolite biosynthesis. It participates in alkaloid biosynthesis. Its pathway is mycotoxin biosynthesis. In terms of biological role, monooxygenase; part of the gene cluster that mediates the biosynthesis of the aspoquinolone mycotoxins. The role of asqM within the aspoquinolone pathway has still to be determined. The first step of the pathway is catalyzed by the nonribosomal peptide synthetase asqK that condenses anthranilic acid and O-methyl-L-tyrosine to produce 4'-methoxycyclopeptin. 4'-methoxycyclopeptin is then converted to 4'-methoxydehydrocyclopeptin by the ketoglutarate-dependent dioxygenase asqJ. AsqJ also converts its first product 4'-methoxydehydrocyclopeptin to 4'-methoxycyclopenin. The following conversion of 4'-methoxycyclopenin into 4'-methoxyviridicatin is catalyzed by the cyclopenase asqI. 4'-methoxyviridicatin is the precursor of quinolone natural products, and is further converted to quinolinone B. The prenyltransferase asqH1 then catalyzes the canonical Friedel-Crafts alkylation of quinolinone B with dimethylallyl cation to yield dimethylallyl quinolone, which is subjected to FAD-dependent dehydrogenation by the FAD-linked oxidoreductase asqF to yield conjugated aryl diene. The delta(3') double bond then serves as the site of the second alkylation with DMAPP catalyzed by the prenyltransferase asqH2 to yield a carbenium ion intermediate, which can be attacked by H(2)O to yield a styrenyl quinolone containing a C3'-hydroxyprenyl chain. The FAD-dependent monooxygenase asqG performs epoxidation of the terminal C7'-C8' olefin. Finally, after dehydratation of the epoxide at C3 by asqC, the quinolone epoxide rearrangement protein asqO catalyzes an enzymatic 3-exo-tet cyclization to yield the cyclopropyl-THF ring system in aspoquinolone. The chain is Monooxygenase asqM from Emericella nidulans (strain FGSC A4 / ATCC 38163 / CBS 112.46 / NRRL 194 / M139) (Aspergillus nidulans).